A 121-amino-acid polypeptide reads, in one-letter code: Large ribosomal subunit protein bL12 (121 aa).

Belongs to the bacterial ribosomal protein bL12 family. In terms of assembly, homodimer. Part of the ribosomal stalk of the 50S ribosomal subunit. Forms a multimeric L10(L12)X complex, where L10 forms an elongated spine to which 2 to 4 L12 dimers bind in a sequential fashion. Binds GTP-bound translation factors.

Its function is as follows. Forms part of the ribosomal stalk which helps the ribosome interact with GTP-bound translation factors. Is thus essential for accurate translation. This is Large ribosomal subunit protein bL12 from Streptococcus uberis (strain ATCC BAA-854 / 0140J).